The chain runs to 192 residues: UPF0312 protein Psyr_0457 (192 aa).

An N-terminal signal peptide occupies residues 1–23 (MLKKSLAALALGTALLSAGQAMA).

This sequence belongs to the UPF0312 family. Type 1 subfamily.

Its subcellular location is the periplasm. The protein is UPF0312 protein Psyr_0457 of Pseudomonas syringae pv. syringae (strain B728a).